Here is a 273-residue protein sequence, read N- to C-terminus: Anthocyanin regulatory C1 protein (273 aa).

2 HTH myb-type domains span residues 9-65 and 66-116; these read KEGV…RPNI and RRGN…GRRA. 2 DNA-binding regions (H-T-H motif) span residues 37–61 and 89–112; these read WREV…LNYL and WSLI…NSTL. 2 disordered regions span residues 137–164 and 196–220; these read ATPA…SAGT and AGET…SDDC. Residues 204–214 show a composition bias toward gly residues; the sequence is AGGGGGGGGEA.

It is found in the nucleus. Controls the expression of genes involved in anthocyanin biosynthesis. Regulates the expression of at least 3 structural genes: chalcone synthase, dihydroflavonol reductase and flavonol O(3) glucosyltransferase. C1 acts as a trans-acting factor. This chain is Anthocyanin regulatory C1 protein (C1), found in Zea mays (Maize).